The sequence spans 112 residues: Secretoglobin family 2B member 24 (112 aa).

Residues 1 to 23 (MKGTLLLLALLMIGELGFHTTEA) form the signal peptide.

Belongs to the secretoglobin family. Expressed in lacrimal gland, at higher level in males than females.

The protein localises to the secreted. The polypeptide is Secretoglobin family 2B member 24 (Scgb2b24) (Mus musculus (Mouse)).